The following is a 79-amino-acid chain: Sec-independent protein translocase protein TatA (79 aa).

Residues 1–21 (MGSLSIWHWLIVLLIVALVFG) form a helical membrane-spanning segment. Residues 46–79 (ADAPAAEAQQRELPRNGAVDVEAKEKTPRSGDYR) form a disordered region. Basic and acidic residues predominate over residues 66–79 (VEAKEKTPRSGDYR).

It belongs to the TatA/E family. As to quaternary structure, the Tat system comprises two distinct complexes: a TatABC complex, containing multiple copies of TatA, TatB and TatC subunits, and a separate TatA complex, containing only TatA subunits. Substrates initially bind to the TatABC complex, which probably triggers association of the separate TatA complex to form the active translocon.

It is found in the cell inner membrane. In terms of biological role, part of the twin-arginine translocation (Tat) system that transports large folded proteins containing a characteristic twin-arginine motif in their signal peptide across membranes. TatA could form the protein-conducting channel of the Tat system. This is Sec-independent protein translocase protein TatA from Paraburkholderia phytofirmans (strain DSM 17436 / LMG 22146 / PsJN) (Burkholderia phytofirmans).